A 396-amino-acid chain; its full sequence is NADH-quinone oxidoreductase subunit D 1 (396 aa).

It belongs to the complex I 49 kDa subunit family. As to quaternary structure, NDH-1 is composed of 14 different subunits. Subunits NuoB, C, D, E, F, and G constitute the peripheral sector of the complex.

The protein resides in the cell inner membrane. The catalysed reaction is a quinone + NADH + 5 H(+)(in) = a quinol + NAD(+) + 4 H(+)(out). In terms of biological role, NDH-1 shuttles electrons from NADH, via FMN and iron-sulfur (Fe-S) centers, to quinones in the respiratory chain. The immediate electron acceptor for the enzyme in this species is believed to be ubiquinone. Couples the redox reaction to proton translocation (for every two electrons transferred, four hydrogen ions are translocated across the cytoplasmic membrane), and thus conserves the redox energy in a proton gradient. The protein is NADH-quinone oxidoreductase subunit D 1 of Rhizobium meliloti (strain 1021) (Ensifer meliloti).